A 287-amino-acid polypeptide reads, in one-letter code: Large ribosomal subunit protein uL2 (287 aa).

Residues 221–287 (RGSVMNPCDH…SKRSRGGRDS (67 aa)) are disordered. The segment covering 258–287 (KTRKKNKPSNKLVVRRRRRISKRSRGGRDS) has biased composition (basic residues).

It belongs to the universal ribosomal protein uL2 family. As to quaternary structure, part of the 50S ribosomal subunit. Forms a bridge to the 30S subunit in the 70S ribosome.

Functionally, one of the primary rRNA binding proteins. Required for association of the 30S and 50S subunits to form the 70S ribosome, for tRNA binding and peptide bond formation. It has been suggested to have peptidyltransferase activity; this is somewhat controversial. Makes several contacts with the 16S rRNA in the 70S ribosome. The sequence is that of Large ribosomal subunit protein uL2 from Prochlorococcus marinus (strain MIT 9301).